The following is a 159-amino-acid chain: uncharacterized protein (159 aa).

One can recognise an N-acetyltransferase domain in the interval 7–151 (LLINYKTLEE…NPLIWEPAHI (145 aa)).

This is an uncharacterized protein from Bacillus pumilus (strain SAFR-032).